Here is a 256-residue protein sequence, read N- to C-terminus: MGRGRVQLKRIENKINRQVTFSKRRAGLLKKAHEISVLCDAEVALVVFSHKGKLFEYSTDSCMEKILERYERYSYAERQLIAPESDVNTNWSMEYNRLKAKIELLERNQRHYLGEDLQAMSPKELQNLEQQLDTALKHIRTRKNQLMYESINELQKKEKAIQEQNSMLFKQIKEREKIFRAQQEQWDQQNQGPNMPPPLPPQQHQIQHPYMLFHQPFPFFNMGGLYQEDDPMAMRRNDLELTFEPVYNCNLGCFAA.

The MADS-box domain occupies 1 to 61; it reads MGRGRVQLKR…GKLFEYSTDS (61 aa). Residues 88-178 form the K-box domain; that stretch reads NTNWSMEYNR…FKQIKEREKI (91 aa).

Homodimer capable of binding to CArG-box sequences.

It localises to the nucleus. Functionally, transcription factor that promotes early floral meristem identity in synergy with LEAFY. Displays a redundant function with CAULIFLOWER in the up-regulation of LEAFY. Required subsequently for the transition of an inflorescence meristem into a floral meristem, and for the normal development of sepals and petals in flowers. Regulates positively B class homeotic proteins. This Citrus sinensis (Sweet orange) protein is Floral homeotic protein APETALA 1 (AP1).